We begin with the raw amino-acid sequence, 499 residues long: Potassium voltage-gated channel subfamily A member 2 (499 aa).

The tract at residues 1–27 is disordered; it reads MTVATGEPADEAAALPGHPQDTYDPEA. A tetramerization domain region spans residues 1–125; the sequence is MTVATGEPAD…YELGEEAMEM (125 aa). Topologically, residues 1 to 160 are cytoplasmic; it reads MTVATGEPAD…LLFEYPESSG (160 aa). The chain crosses the membrane as a helical span at residues 161–182; sequence PARIIAIVSVMVILISIVSFCL. The Extracellular portion of the chain corresponds to 183 to 221; it reads ETLPIFRDENEDMHGGGVTFHTYSNSTIGYQQSTSFTDP. The N-linked (GlcNAc...) asparagine glycan is linked to asparagine 207. The helical transmembrane segment at 222 to 243 threads the bilayer; the sequence is FFIVETLCIIWFSFEFLVRFFA. Cysteine 244 is lipidated: S-palmitoyl cysteine. The Cytoplasmic portion of the chain corresponds to 244 to 254; that stretch reads CPSKAGFFTNI. A helical membrane pass occupies residues 255–275; that stretch reads MNIIDIVAIIPYFITLGTELA. Residues 276–289 are Extracellular-facing; that stretch reads EKPEDAQQGQQAMS. A helical; Voltage-sensor membrane pass occupies residues 290–310; it reads LAILRVIRLVRVFRIFKLSRH. Over 311-325 the chain is Cytoplasmic; the sequence is SKGLQILGQTLKASM. Positions 312–325 are S4-S5 linker; the sequence is KGLQILGQTLKASM. Residues 326 to 347 traverse the membrane as a helical segment; the sequence is RELGLLIFFLFIGVILFSSAVY. The Extracellular segment spans residues 348-361; that stretch reads FAEADERESQFPSI. The helical intramembrane region spans 362-373; sequence PDAFWWAVVSMT. The Selectivity filter motif lies at 374-379; sequence TVGYGD. The stretch at 374–381 is an intramembrane region; it reads TVGYGDMV. Over 382-388 the chain is Extracellular; the sequence is PTTIGGK. A helical transmembrane segment spans residues 389-417; it reads IVGSLCAIAGVLTIALPVPVIVSNFNYFY. At 418–499 the chain is on the cytoplasmic side; the sequence is HRETEGEEQA…VNITKMLTDV (82 aa). Tyrosine 429 carries the post-translational modification Phosphotyrosine. Phosphoserine occurs at positions 434, 440, 441, and 449. At tyrosine 458 the chain carries Phosphotyrosine. Serine 468 carries the phosphoserine modification. Positions 497–499 match the PDZ-binding motif; sequence TDV.

The protein belongs to the potassium channel family. A (Shaker) (TC 1.A.1.2) subfamily. Kv1.2/KCNA2 sub-subfamily. In terms of assembly, homotetramer and heterotetramer with other channel-forming alpha subunits, such as KCNA1, KCNA4, KCNA5, KCNA6 and KCNA7. Channel activity is regulated by interaction with the beta subunits, including KCNAB1 and KCNAB2. Identified in a complex with KCNA1 and KCNAB2. Identified in a complex with KCNA5 and KCNAB1. Interacts with the beta subunit KCNAB1. Identified in a complex with KCNA4 and FYN. Interacts with PTK2B. Interacts (via C-terminus) with CTTN. Interacts (via N-terminal cytoplasmic domain) with RHOA (GTP-bound form); this regulates channel activity by reducing location at the cell surface in response to CHRM1 activation. Interacts with DRD2. Interacts with SIGMAR1; cocaine consumption leads to increased interaction. Interacts with ADAM22. Interacts with CNTNAP2. Interacts (via C-terminus) with the PDZ domains of DLG1, DLG2 and DLG4. Interacts with ADAM11. Interacts with LYNX1. Post-translationally, phosphorylated on tyrosine residues; phosphorylation increases in response to ischemia. Phosphorylated on tyrosine residues by activated PTK2B/PYK2. Phosphorylation on tyrosine residues suppresses ion channel activity. Phosphorylated on tyrosine residues in response to CHRM1 activation; this abolishes interaction with CTTN. This is probably due to endocytosis of the phosphorylated channel subunits. Phosphorylated on serine residues in response to increased cAMP levels; phosphorylation is apparently not catalyzed by PKA. In terms of processing, N-glycosylated, with complex, sialylated N-glycans. Expressed in a wide variety of gastrointestinal smooth muscles. Not expressed in portal vein, renal artery, and uterus.

The protein resides in the cell membrane. The protein localises to the membrane. Its subcellular location is the cell projection. It localises to the axon. It is found in the synapse. The protein resides in the presynaptic cell membrane. The protein localises to the synaptosome. Its subcellular location is the endoplasmic reticulum membrane. It localises to the dendrite. It is found in the lamellipodium membrane. The protein resides in the cell junction. The protein localises to the paranodal septate junction. It carries out the reaction K(+)(in) = K(+)(out). Inhibited by 4-aminopyridine (4-AP). Inhibited by dendrotoxin (DTX) and charybdotoxin (CTX), but not by tetraethylammonium (TEA). Inhibited by tityustoxin-K alpha (TsTX-Kalpha), a toxin that is highly specific for KCNA2. Inhibited by maurotoxin. Inhibited by kappaM conotoxins kappaM-RIIIJ and kappaM-RIIIK. Voltage-gated potassium channel that mediates transmembrane potassium transport in excitable membranes, primarily in the brain and the central nervous system, but also in the cardiovascular system. Prevents aberrant action potential firing and regulates neuronal output. Forms tetrameric potassium-selective channels through which potassium ions pass in accordance with their electrochemical gradient. The channel alternates between opened and closed conformations in response to the voltage difference across the membrane. Can form functional homotetrameric channels and heterotetrameric channels that contain variable proportions of KCNA1, KCNA2, KCNA4, KCNA5, KCNA6, KCNA7, and possibly other family members as well; channel properties depend on the type of alpha subunits that are part of the channel. Channel properties are modulated by cytoplasmic beta subunits that regulate the subcellular location of the alpha subunits and promote rapid inactivation of delayed rectifier potassium channels. In vivo, membranes probably contain a mixture of heteromeric potassium channel complexes, making it difficult to assign currents observed in intact tissues to any particular potassium channel family member. Homotetrameric KCNA2 forms a delayed-rectifier potassium channel that opens in response to membrane depolarization, followed by slow spontaneous channel closure. In contrast, a heteromultimer formed by KCNA2 and KCNA4 shows rapid inactivation. Regulates neuronal excitability and plays a role as pacemaker in the regulation of neuronal action potentials. KCNA2-containing channels play a presynaptic role and prevent hyperexcitability and aberrant action potential firing. Response to toxins that are selective for KCNA2-containing potassium channels suggests that in Purkinje cells, dendritic subthreshold KCNA2-containing potassium channels prevent random spontaneous calcium spikes, suppressing dendritic hyperexcitability without hindering the generation of somatic action potentials, and thereby play an important role in motor coordination. Plays a role in the induction of long-term potentiation of neuron excitability in the CA3 layer of the hippocampus. May function as down-stream effector for G protein-coupled receptors and inhibit GABAergic inputs to basolateral amygdala neurons. May contribute to the regulation of neurotransmitter release, such as gamma-aminobutyric acid (GABA). Contributes to the regulation of the axonal release of the neurotransmitter dopamine. Reduced KCNA2 expression plays a role in the perception of neuropathic pain after peripheral nerve injury, but not acute pain. Plays a role in the regulation of the time spent in non-rapid eye movement (NREM) sleep. This chain is Potassium voltage-gated channel subfamily A member 2 (KCNA2), found in Canis lupus familiaris (Dog).